The following is a 100-amino-acid chain: uncharacterized protein (100 aa).

Residues 78–100 (NNGNLDFKGRADERRQPVSNLRM) form a disordered region. Residues 84 to 93 (FKGRADERRQ) show a composition bias toward basic and acidic residues.

This is an uncharacterized protein from Saccharomyces cerevisiae (strain ATCC 204508 / S288c) (Baker's yeast).